We begin with the raw amino-acid sequence, 681 residues long: DNA ligase (681 aa).

Residues 33–37 (DGQFD), 83–84 (SL), and Glu113 each bind NAD(+). Lys115 functions as the N6-AMP-lysine intermediate in the catalytic mechanism. Residues Arg136, Glu176, Lys292, and Lys316 each coordinate NAD(+). 4 residues coordinate Zn(2+): Cys410, Cys413, Cys429, and Cys435. Residues 599–681 (SIPRNLEGLS…RALLADGPPA (83 aa)) form the BRCT domain.

This sequence belongs to the NAD-dependent DNA ligase family. LigA subfamily. Mg(2+) serves as cofactor. It depends on Mn(2+) as a cofactor.

It carries out the reaction NAD(+) + (deoxyribonucleotide)n-3'-hydroxyl + 5'-phospho-(deoxyribonucleotide)m = (deoxyribonucleotide)n+m + AMP + beta-nicotinamide D-nucleotide.. Its function is as follows. DNA ligase that catalyzes the formation of phosphodiester linkages between 5'-phosphoryl and 3'-hydroxyl groups in double-stranded DNA using NAD as a coenzyme and as the energy source for the reaction. It is essential for DNA replication and repair of damaged DNA. This Mycobacteroides abscessus (strain ATCC 19977 / DSM 44196 / CCUG 20993 / CIP 104536 / JCM 13569 / NCTC 13031 / TMC 1543 / L948) (Mycobacterium abscessus) protein is DNA ligase.